The primary structure comprises 295 residues: Nucleotide-binding protein PEPE_0450 (295 aa).

12-19 lines the ATP pocket; that stretch reads GMSGAGKT. 62–65 provides a ligand contact to GTP; the sequence is DLRS.

Belongs to the RapZ-like family.

Displays ATPase and GTPase activities. The chain is Nucleotide-binding protein PEPE_0450 from Pediococcus pentosaceus (strain ATCC 25745 / CCUG 21536 / LMG 10740 / 183-1w).